Reading from the N-terminus, the 122-residue chain is Ribosome-binding factor A (122 aa).

Belongs to the RbfA family. Monomer. Binds 30S ribosomal subunits, but not 50S ribosomal subunits or 70S ribosomes.

The protein resides in the cytoplasm. One of several proteins that assist in the late maturation steps of the functional core of the 30S ribosomal subunit. Associates with free 30S ribosomal subunits (but not with 30S subunits that are part of 70S ribosomes or polysomes). Required for efficient processing of 16S rRNA. May interact with the 5'-terminal helix region of 16S rRNA. The protein is Ribosome-binding factor A of Caldanaerobacter subterraneus subsp. tengcongensis (strain DSM 15242 / JCM 11007 / NBRC 100824 / MB4) (Thermoanaerobacter tengcongensis).